The chain runs to 126 residues: Large ribosomal subunit protein bL12 (126 aa).

The protein belongs to the bacterial ribosomal protein bL12 family. As to quaternary structure, homodimer. Part of the ribosomal stalk of the 50S ribosomal subunit. Forms a multimeric L10(L12)X complex, where L10 forms an elongated spine to which 2 to 4 L12 dimers bind in a sequential fashion. Binds GTP-bound translation factors.

Its function is as follows. Forms part of the ribosomal stalk which helps the ribosome interact with GTP-bound translation factors. Is thus essential for accurate translation. This chain is Large ribosomal subunit protein bL12, found in Methylobacterium sp. (strain 4-46).